The chain runs to 198 residues: Glycerol-3-phosphate acyltransferase (198 aa).

A run of 3 helical transmembrane segments spans residues 5–25 (AVIL…GYLI), 114–134 (VLIM…IAVL), and 154–176 (AFAL…LVAV).

It belongs to the PlsY family. As to quaternary structure, probably interacts with PlsX.

The protein localises to the cell membrane. It catalyses the reaction an acyl phosphate + sn-glycerol 3-phosphate = a 1-acyl-sn-glycero-3-phosphate + phosphate. It functions in the pathway lipid metabolism; phospholipid metabolism. Functionally, catalyzes the transfer of an acyl group from acyl-phosphate (acyl-PO(4)) to glycerol-3-phosphate (G3P) to form lysophosphatidic acid (LPA). This enzyme utilizes acyl-phosphate as fatty acyl donor, but not acyl-CoA or acyl-ACP. This chain is Glycerol-3-phosphate acyltransferase, found in Desulforudis audaxviator (strain MP104C).